Consider the following 204-residue polypeptide: Recombination protein RecR (204 aa).

The segment at 63 to 78 (CNRCFNITVEDPCTIC) adopts a C4-type zinc-finger fold. One can recognise a Toprim domain in the interval 86–181 (RQVCVVEEPL…RVTRLARGLP (96 aa)).

This sequence belongs to the RecR family.

In terms of biological role, may play a role in DNA repair. It seems to be involved in an RecBC-independent recombinational process of DNA repair. It may act with RecF and RecO. The polypeptide is Recombination protein RecR (Herpetosiphon aurantiacus (strain ATCC 23779 / DSM 785 / 114-95)).